A 238-amino-acid polypeptide reads, in one-letter code: 2-C-methyl-D-erythritol 4-phosphate cytidylyltransferase (238 aa).

This sequence belongs to the IspD/TarI cytidylyltransferase family. IspD subfamily.

It catalyses the reaction 2-C-methyl-D-erythritol 4-phosphate + CTP + H(+) = 4-CDP-2-C-methyl-D-erythritol + diphosphate. It functions in the pathway isoprenoid biosynthesis; isopentenyl diphosphate biosynthesis via DXP pathway; isopentenyl diphosphate from 1-deoxy-D-xylulose 5-phosphate: step 2/6. Its function is as follows. Catalyzes the formation of 4-diphosphocytidyl-2-C-methyl-D-erythritol from CTP and 2-C-methyl-D-erythritol 4-phosphate (MEP). This chain is 2-C-methyl-D-erythritol 4-phosphate cytidylyltransferase, found in Paraburkholderia phytofirmans (strain DSM 17436 / LMG 22146 / PsJN) (Burkholderia phytofirmans).